Reading from the N-terminus, the 193-residue chain is Putative 3-methyladenine DNA glycosylase (193 aa).

It belongs to the DNA glycosylase MPG family.

This is Putative 3-methyladenine DNA glycosylase from Nitrosospira multiformis (strain ATCC 25196 / NCIMB 11849 / C 71).